We begin with the raw amino-acid sequence, 372 residues long: Flagellar P-ring protein (372 aa).

The signal sequence occupies residues 1–26; it reads MNLSSLSFRLLATLLGACVVVAPASA.

It belongs to the FlgI family. In terms of assembly, the basal body constitutes a major portion of the flagellar organelle and consists of four rings (L,P,S, and M) mounted on a central rod.

Its subcellular location is the periplasm. The protein localises to the bacterial flagellum basal body. Functionally, assembles around the rod to form the L-ring and probably protects the motor/basal body from shearing forces during rotation. This chain is Flagellar P-ring protein, found in Xanthomonas oryzae pv. oryzae (strain MAFF 311018).